The sequence spans 309 residues: tRNA pseudouridine synthase B (309 aa).

The active-site Nucleophile is the D45.

Belongs to the pseudouridine synthase TruB family. Type 1 subfamily.

It carries out the reaction uridine(55) in tRNA = pseudouridine(55) in tRNA. Its function is as follows. Responsible for synthesis of pseudouridine from uracil-55 in the psi GC loop of transfer RNAs. The chain is tRNA pseudouridine synthase B from Oleidesulfovibrio alaskensis (strain ATCC BAA-1058 / DSM 17464 / G20) (Desulfovibrio alaskensis).